A 53-amino-acid chain; its full sequence is Dihydrolipoyl dehydrogenase (53 aa).

FAD is bound by residues 35–44 (EKYPTFGGTC) and lysine 53. A disulfide bridge links cysteine 44 with cysteine 49.

This sequence belongs to the class-I pyridine nucleotide-disulfide oxidoreductase family. In terms of assembly, homodimer. FAD serves as cofactor.

Its subcellular location is the mitochondrion. It carries out the reaction N(6)-[(R)-dihydrolipoyl]-L-lysyl-[protein] + NAD(+) = N(6)-[(R)-lipoyl]-L-lysyl-[protein] + NADH + H(+). Lipoamide reduction and the NADH -&gt; NAD reaction are both completely inhibited by copper and cadmium ions. Functionally, lipoamide dehydrogenase is a component of the glycine cleavage system as well as of the alpha-ketoacid dehydrogenase complexes. This enzyme has lipoamide dehydrogenase activity and NADH -&gt; NAD transhydrogenation activity. Also displays some NADH-ferricyanide reductase and NADPH -&gt; NAD transydrogenation activities. This is Dihydrolipoyl dehydrogenase from Hymenolepis diminuta (Rat tapeworm).